The primary structure comprises 432 residues: Small ribosomal subunit protein uS5m (432 aa).

Residues 110 to 130 (AGARKGRGKRTKKKKRKDLNR) are disordered. Basic residues predominate over residues 113–127 (RKGRGKRTKKKKRKD). In terms of domain architecture, S5 DRBM spans 220-284 (FDTRILEVRN…NRAIHYLHYI (65 aa)).

This sequence belongs to the universal ribosomal protein uS5 family. Component of the mitochondrial ribosome small subunit (28S) which comprises a 12S rRNA and about 30 distinct proteins.

It is found in the mitochondrion. In Mus musculus (Mouse), this protein is Small ribosomal subunit protein uS5m (Mrps5).